The sequence spans 259 residues: Undecaprenyl-diphosphatase 3 (259 aa).

Transmembrane regions (helical) follow at residues 1–21 (MNWL…FLPI), 39–59 (AGLF…FIYY), 71–91 (FSKL…IGLL), 99–119 (ISKT…FLYM), 133–153 (ITYK…FPAI), 174–194 (AYFS…LQFV), 208–228 (SLIV…SWMI), and 239–259 (FAYY…TDVF).

This sequence belongs to the UppP family.

The protein localises to the cell membrane. It carries out the reaction di-trans,octa-cis-undecaprenyl diphosphate + H2O = di-trans,octa-cis-undecaprenyl phosphate + phosphate + H(+). In terms of biological role, catalyzes the dephosphorylation of undecaprenyl diphosphate (UPP). Confers resistance to bacitracin. The protein is Undecaprenyl-diphosphatase 3 of Bacillus cereus (strain ATCC 14579 / DSM 31 / CCUG 7414 / JCM 2152 / NBRC 15305 / NCIMB 9373 / NCTC 2599 / NRRL B-3711).